A 130-amino-acid chain; its full sequence is Small ribosomal subunit protein uS8 (130 aa).

This sequence belongs to the universal ribosomal protein uS8 family. As to quaternary structure, part of the 30S ribosomal subunit. Contacts proteins S5 and S12.

Its function is as follows. One of the primary rRNA binding proteins, it binds directly to 16S rRNA central domain where it helps coordinate assembly of the platform of the 30S subunit. The sequence is that of Small ribosomal subunit protein uS8 from Actinobacillus succinogenes (strain ATCC 55618 / DSM 22257 / CCUG 43843 / 130Z).